Consider the following 116-residue polypeptide: Large ribosomal subunit protein bL19 (116 aa).

Belongs to the bacterial ribosomal protein bL19 family.

Functionally, this protein is located at the 30S-50S ribosomal subunit interface and may play a role in the structure and function of the aminoacyl-tRNA binding site. The protein is Large ribosomal subunit protein bL19 of Actinobacillus succinogenes (strain ATCC 55618 / DSM 22257 / CCUG 43843 / 130Z).